A 111-amino-acid chain; its full sequence is Small ribosomal subunit protein bS16 (111 aa).

The disordered stretch occupies residues 92–111 (MDVKAKNRKARSSKQEAKEA).

Belongs to the bacterial ribosomal protein bS16 family.

In Rickettsia akari (strain Hartford), this protein is Small ribosomal subunit protein bS16.